Here is a 526-residue protein sequence, read N- to C-terminus: MASKIASLFSPSETASKDQHENVAEDLELGTASSQSDGIHETNSEYDEKKREESPEVIDISNLISSDHPAHPQNWHWAKRWSIVFMFCLMQIYVIWTSNGFGSIEYSVMAQFNVSAQVATLCLSMNILGSGLGPMFLGPLSDIGGRKPVYFCSIFVYTVFNISCALPRNIVQMIISHFIIGVAGSTALTNVAGGIPDLFPEDTAGVPMSLFVWACAGGAIGAPMATGVDINAKYGWRWLYYINIIVGGFFLIVILIIPETLPIKVITRYENAKGRIVEGIPKNNLKEVLKKCKFVTTMGFRMMLTEPIILSMGLYNFYAYGISYFFLTAIWPVFYDTYKMSEMGASCTYLSGFVASTLLFLYQPIQDWIFRRDKAKNNGVARPEARFTSALFITLLFPAGMFLFAFTCHPPFPWMSPIVGNSMVTVANGHNWMCILNYLTDSYPLLSGSAVAAFTLPSFIGATVFAHVSQIMFNNMSVKWAVATMAFISISIPFIIYTFYFFGQRIRALSSLTGNKALKYLPLENN.

Positions 1–53 (MASKIASLFSPSETASKDQHENVAEDLELGTASSQSDGIHETNSEYDEKKREE) are disordered. A compositionally biased stretch (basic and acidic residues) spans 38–53 (GIHETNSEYDEKKREE). The next 12 helical transmembrane spans lie at 81–101 (WSIV…SNGF), 118–138 (VATL…MFLG), 147–167 (KPVY…CALP), 173–192 (MIIS…TNVA), 204–224 (AGVP…GAPM), 238–257 (WLYY…ILII), 314–330 (LYNF…LTAI), 349–366 (YLSG…QPIQ), 387–407 (FTSA…FAFT), 413–432 (PWMS…GHNW), 444–461 (PLLS…SFIG), and 480–501 (WAVA…TFYF).

This sequence belongs to the major facilitator superfamily. CAR1 family.

It is found in the membrane. Its function is as follows. Thiamine-regulated, high affinity import carrier of pyridoxine, pyridoxal and pyridoxamine. Also imports, but does not export, amiloride and so confers sensitivity. This chain is Vitamin B6 transporter bsu1 (bsu1), found in Schizosaccharomyces pombe (strain 972 / ATCC 24843) (Fission yeast).